A 650-amino-acid polypeptide reads, in one-letter code: Aminopeptidase B (650 aa).

Position 2 is an N-acetylalanine (Ala2). Ser7 carries the post-translational modification Phosphoserine. 298 to 302 lines the substrate pocket; that stretch reads GGMEN. His325 lines the Zn(2+) pocket. Glu326 (proton acceptor) is an active-site residue. Zn(2+) contacts are provided by His329 and Glu348. Position 446 is an N6-acetyllysine (Lys446).

Belongs to the peptidase M1 family. Requires Zn(2+) as cofactor.

Its subcellular location is the secreted. The catalysed reaction is Release of N-terminal Arg and Lys from oligopeptides when P1' is not Pro. Also acts on arylamides of Arg and Lys.. Functionally, exopeptidase which selectively removes arginine and/or lysine residues from the N-terminus of several peptide substrates including Arg(0)-Leu-enkephalin, Arg(0)-Met-enkephalin and Arg(-1)-Lys(0)-somatostatin-14. Can hydrolyze leukotriene A4 (LTA-4) into leukotriene B4 (LTB-4). This is Aminopeptidase B (RNPEP) from Homo sapiens (Human).